We begin with the raw amino-acid sequence, 358 residues long: Flap endonuclease 1 (358 aa).

The interval 1–103 (MGIKRLSKLI…HEFEKRTKRR (103 aa)) is N-domain. Mg(2+) is bound at residue Asp-34. The DNA site is built by Arg-47 and Arg-69. Residues Asp-85, Glu-157, Glu-159, Asp-178, and Asp-180 each contribute to the Mg(2+) site. Residues 121 to 252 (LVSKYDRMNV…KRAFEYIKKY (132 aa)) form an I-domain region. Residue Glu-157 coordinates DNA. 2 residues coordinate DNA: Gly-230 and Asp-232. Asp-232 serves as a coordination point for Mg(2+). Positions 346–354 (KQTRIDSFF) are interaction with PCNA.

It belongs to the XPG/RAD2 endonuclease family. FEN1 subfamily. As to quaternary structure, interacts with PCNA. Three molecules of FEN1 bind to one PCNA trimer with each molecule binding to one PCNA monomer. PCNA stimulates the nuclease activity without altering cleavage specificity. Requires Mg(2+) as cofactor. Phosphorylated. Phosphorylation upon DNA damage induces relocalization to the nuclear plasma.

It is found in the nucleus. It localises to the nucleolus. The protein localises to the nucleoplasm. Its subcellular location is the mitochondrion. Its function is as follows. Structure-specific nuclease with 5'-flap endonuclease and 5'-3' exonuclease activities involved in DNA replication and repair. During DNA replication, cleaves the 5'-overhanging flap structure that is generated by displacement synthesis when DNA polymerase encounters the 5'-end of a downstream Okazaki fragment. It enters the flap from the 5'-end and then tracks to cleave the flap base, leaving a nick for ligation. Also involved in the long patch base excision repair (LP-BER) pathway, by cleaving within the apurinic/apyrimidinic (AP) site-terminated flap. Acts as a genome stabilization factor that prevents flaps from equilibrating into structures that lead to duplications and deletions. Also possesses 5'-3' exonuclease activity on nicked or gapped double-stranded DNA, and exhibits RNase H activity. Also involved in replication and repair of rDNA and in repairing mitochondrial DNA. This is Flap endonuclease 1 from Enterocytozoon bieneusi (strain H348) (Microsporidian parasite).